Consider the following 557-residue polypeptide: Membrane protein insertase YidC (557 aa).

Transmembrane regions (helical) follow at residues 371–391 (WGWS…PLSA), 437–457 (LGGC…YWVL), and 515–535 (PIVF…YWVV).

This sequence belongs to the OXA1/ALB3/YidC family. Type 1 subfamily. In terms of assembly, interacts with the Sec translocase complex via SecD. Specifically interacts with transmembrane segments of nascent integral membrane proteins during membrane integration.

The protein localises to the cell inner membrane. In terms of biological role, required for the insertion and/or proper folding and/or complex formation of integral membrane proteins into the membrane. Involved in integration of membrane proteins that insert both dependently and independently of the Sec translocase complex, as well as at least some lipoproteins. Aids folding of multispanning membrane proteins. The polypeptide is Membrane protein insertase YidC (Polynucleobacter necessarius subsp. necessarius (strain STIR1)).